Consider the following 3351-residue polypeptide: Apolipophorins (3351 aa).

Positions 1–25 are cleaved as a signal peptide; it reads MARMKYNIALIGILASVLLTIAVNA. In terms of domain architecture, Vitellogenin spans 43-641; it reads YIPGNYYDYS…SQHGFLPRSS (599 aa). Residues Asn67, Asn644, Asn1514, Asn1744, Asn1932, Asn1979, and Asn2822 are each glycosylated (N-linked (GlcNAc...) asparagine). The VWFD domain maps to 2786–2952; that stretch reads LRGHVVDGKH…DYGVGKCTAI (167 aa).

In terms of assembly, interacts with Nrx-1 (via cytoplasmic domain); the interaction supports apolpp/ApoLI protein stability. In terms of processing, may be modified covalently by lipidation. Cleaved into 2 chains by furin protease. However, prevention of cleavage does not impair its function. During stage 12, it is highly present throughout the yolk sac. By late stage 14, it localizes in the lateral fat body cells. Starting at stage 14, it localizes to the apodemes. Component of hemolymph clots (at protein level). Expressed in the amniosera. Expressed in rhabdomere of photoreceptor cells in retina (at protein level). In terms of tissue distribution, expressed in rhabdomere of photoreceptor cells in retina (at protein level). As to expression, expressed in simper cells as well as interphotoreceptor matrix (at protein level).

Its subcellular location is the secreted. It is found in the cell projection. The protein resides in the rhabdomere. Its function is as follows. Constitutes the major component of lipophorin, which mediates transport for various types of lipids in hemolymph. Acts by forming lipoprotein particles that bind lipoproteins and lipids. Also involved in the transport of hydrophobic ligands like juvenile hormones, pheromone hydrocarbons and carotenoids. Required for morphogens wingless (wg) and hedgehog (hh) function, probably by acting as vehicles for the movement of wg and hh, explaining how covalently lipidated wg and hh can spread over long distances. May also be involved in transport and/or metabolism of heme. Involved in yolk granule formation. May be a component of yolk incorporated into yolk granules via yl/yolkless-mediated endocytosis and the endolysosomal pathway. This is Apolipophorins from Drosophila melanogaster (Fruit fly).